The primary structure comprises 612 residues: UBA domain-containing protein 6 (612 aa).

The UBA domain occupies 3–42 (DLDTKIKTLKNMGVSESDAKDSLERCGYDVESAAEFIFSG). Position 595 is a phosphoserine (S595).

The protein localises to the cytoplasm. It localises to the nucleus. The chain is UBA domain-containing protein 6 (ucp6) from Schizosaccharomyces pombe (strain 972 / ATCC 24843) (Fission yeast).